The sequence spans 77 residues: Probable [Fe-S]-dependent transcriptional repressor (77 aa).

Residues Cys54, Cys59, Cys62, and Cys68 each contribute to the iron-sulfur cluster site.

It belongs to the FeoC family.

In terms of biological role, may function as a transcriptional regulator that controls feoABC expression. This chain is Probable [Fe-S]-dependent transcriptional repressor, found in Proteus mirabilis (strain HI4320).